The following is a 234-amino-acid chain: Alpha N-terminal protein methyltransferase 1 (234 aa).

Residues Gly-71, Arg-76, 93–95, 120–121, and Gln-136 contribute to the S-adenosyl-L-methionine site; these read DVV and LQ.

This sequence belongs to the methyltransferase superfamily. NTM1 family. Expressed in uterine cells and PVT neurons of the tail. Expressed in pharynx, intestine and DVB tail neuron.

The enzyme catalyses N-terminal L-alanyl-L-prolyl-L-lysyl-[protein] + 3 S-adenosyl-L-methionine = N-terminal N,N,N-trimethyl-L-alanyl-L-prolyl-L-lysyl-[protein] + 3 S-adenosyl-L-homocysteine + 3 H(+). It carries out the reaction N-terminal L-seryl-L-prolyl-L-lysyl-[protein] + 3 S-adenosyl-L-methionine = N-terminal N,N,N-trimethyl-L-seryl-L-prolyl-L-lysyl-[protein] + 3 S-adenosyl-L-homocysteine + 3 H(+). It catalyses the reaction N-terminal L-prolyl-L-prolyl-L-lysyl-[protein] + 2 S-adenosyl-L-methionine = N-terminal N,N-dimethyl-L-prolyl-L-prolyl-L-lysyl-[protein] + 2 S-adenosyl-L-homocysteine + 2 H(+). Alpha-N-methyltransferase that methylates the N-terminus of target proteins containing the N-terminal motif [Ala/Pro/Ser]-Pro-Lys when the initiator Met is cleaved. Specifically catalyzes mono-, di- or tri-methylation of exposed alpha-amino group of Ala or Ser residue in the [Ala/Ser]-Pro-Lys motif and mono- or di-methylation of Pro in the Pro-Pro-Lys motif. Probably required for the synthesis of neurotransmitter melatonin from serotonin, which plays a role in promoting a sleep-like state, called lethargus, during larval development. This is Alpha N-terminal protein methyltransferase 1 from Caenorhabditis elegans.